Here is a 565-residue protein sequence, read N- to C-terminus: Pentatricopeptide repeat-containing protein At3g20730 (565 aa).

PPR repeat units lie at residues 12-46, 47-77, 78-112, 113-147, 148-178, 179-213, 214-248, 249-279, 280-315, 316-351, 352-382, 383-417, 418-448, and 454-484; these read SPSL…GFCS, NLQL…ISKR, DVVS…DVKA, NQFT…NCAG, NLIV…MKER, DLVS…GKKP, DCFT…GFGR, SSAL…TKKR, DLLS…KTKM, DEVV…QIRF, DVAL…MKEK, DVRS…RIKP, NDVT…MINK, and REEH…KEGI. Residues 491–565 form a type E motif; degenerate region; it reads TWGAFLDACR…NKAPGYSLVY (75 aa).

It belongs to the PPR family. PCMP-E subfamily.

This chain is Pentatricopeptide repeat-containing protein At3g20730 (PCMP-E94), found in Arabidopsis thaliana (Mouse-ear cress).